A 308-amino-acid polypeptide reads, in one-letter code: Ribosomal protein L11 methyltransferase (308 aa).

Residues Thr148, Gly169, Asp191, and Asn239 each coordinate S-adenosyl-L-methionine.

It belongs to the methyltransferase superfamily. PrmA family.

The protein localises to the cytoplasm. It catalyses the reaction L-lysyl-[protein] + 3 S-adenosyl-L-methionine = N(6),N(6),N(6)-trimethyl-L-lysyl-[protein] + 3 S-adenosyl-L-homocysteine + 3 H(+). Its function is as follows. Methylates ribosomal protein L11. The chain is Ribosomal protein L11 methyltransferase from Psychrobacter arcticus (strain DSM 17307 / VKM B-2377 / 273-4).